The sequence spans 512 residues: Sucrose transport protein SUC5 (512 aa).

A disordered region spans residues 1–27 (MGALEAERAANNATALETQSSPEDLGQ). Topologically, residues 1 to 33 (MGALEAERAANNATALETQSSPEDLGQPSPLRK) are cytoplasmic. Polar residues predominate over residues 11–22 (NNATALETQSSP). Phosphoserine is present on Ser20. The chain crosses the membrane as a helical span at residues 34-54 (IISVASIAAGVQFGWALQLSL). Residues 55–67 (LTPYIQLLGIPHK) are Extracellular-facing. A helical membrane pass occupies residues 68-88 (WSSYMWLCGPISGMIVQPIVG). At 89 to 102 (YHSDRCESRFGRRR) the chain is on the cytoplasmic side. A helical transmembrane segment spans residues 103–123 (PFIAAGVALVAVSVFLIGFAA). At 124 to 140 (DMGHSFGDKLENKVRTR) the chain is on the extracellular side. The helical transmembrane segment at 141–161 (AIIIFLTGFWFLDVANNTLQG) threads the bilayer. Topologically, residues 162–179 (PCRAFLADLAAGDAKKTR) are cytoplasmic. Residues 180-200 (VANACFSFFMAVGNVLGYAAG) form a helical membrane-spanning segment. The Extracellular portion of the chain corresponds to 201–225 (SYTNLHKMFPFTMTKACDIYCANLK). A helical transmembrane segment spans residues 226–246 (TCFFLSITLLLIVTFSSLWYV). Residues 247–281 (KDKQWSPPQGDKEEKTSSLFFFGEIFGAVRHMKRP) are Cytoplasmic-facing. A helical transmembrane segment spans residues 282 to 302 (MVMLLIVTVINWIAWFPFILY). The Extracellular portion of the chain corresponds to 303–333 (DTDWMGREVYGGNSDGDERSKKLYDQGVQAG). The helical transmembrane segment at 334–354 (ALGLMFNSILLGFVSLGVESI) threads the bilayer. Topologically, residues 355–363 (GRKMGGAKR) are cytoplasmic. Residues 364 to 384 (LWGCVNFILAIGLAMTVLVTK) traverse the membrane as a helical segment. The Extracellular portion of the chain corresponds to 385–406 (SAEHHREIAGPLAGPSSGIKAG). The chain crosses the membrane as a helical span at residues 407–427 (VFSLFTVLGIPLAITYSIPFA). Topologically, residues 428-440 (LASIFSTNSGAGQ) are cytoplasmic. Residues 441 to 461 (GLSLGVLNIAICIPQMIVSFS) traverse the membrane as a helical segment. The Extracellular portion of the chain corresponds to 462-473 (SGPLDAQFGGGN). A helical membrane pass occupies residues 474-494 (LPSFVVGAIAAAVSGVLALTV). Residues 495-512 (LPSPPPDAPAMSGAMGFH) lie on the Cytoplasmic side of the membrane.

It belongs to the glycoside-pentoside-hexuronide (GPH) cation symporter transporter (TC 2.A.2.4) family. Widely expressed. Expressed in the endosperm and on the epidermis of the outer surface of the cotyledons of torpedo-stage or older embryos.

Its subcellular location is the cell membrane. The enzyme catalyses sucrose(out) + H(+)(out) = sucrose(in) + H(+)(in). It participates in glycan biosynthesis; sucrose metabolism. With respect to regulation, inhibited by protonophores (e.g. carbonyl cyanide m-chlorophenyl-hydrazone (CCCP)) and SH group inhibitors (e.g. p-chloromercuribenzene sulphonic acid (PCMBS)). Its function is as follows. Responsible in a heterologous system for the transport of sucrose into the cell, with the concomitant uptake of protons (symport system). Can also transport biotin, and probably maltose at a lesser rate. In planta, the role of SUC5 for the transport of sucrose seems to be negligible. Plays a role in the nutrition of the filial tissues during early seed development and is probably involved in the import of biotin into the endosperm and the embryo epidermis. This is Sucrose transport protein SUC5 from Arabidopsis thaliana (Mouse-ear cress).